The chain runs to 139 residues: Large ribosomal subunit protein bL17 (139 aa).

Belongs to the bacterial ribosomal protein bL17 family. As to quaternary structure, part of the 50S ribosomal subunit. Contacts protein L32.

The polypeptide is Large ribosomal subunit protein bL17 (Afipia carboxidovorans (strain ATCC 49405 / DSM 1227 / KCTC 32145 / OM5) (Oligotropha carboxidovorans)).